We begin with the raw amino-acid sequence, 246 residues long: MINDINNFIESKKLSLNSRKSYHYDLKQFYKIIGGHVNSEKLALYQQSLSEFKLTARKRKLSAVNQFLFFLYNRGTLKEFYRLQETEKITLAQTKSQIMDLSNFYQDTDYPSGRLIALLILSLGLTPAEIANLKKADFDTTFNILSIEKSQMKRILKLPEDLLPFLLESLEEDGDLVFEHNGKPYSRQWFFNQLTDFLNEKNEQQLTAQLLREQFILKQKENGKTMTELSRLLGLKTPITLERYYR.

Residues 1-72 (MINDINNFIE…AVNQFLFFLY (72 aa)) enclose the Core-binding (CB) domain. The 163-residue stretch at 84-246 (QETEKITLAQ…TPITLERYYR (163 aa)) folds into the Tyr recombinase domain. Residues K149 and R212 contribute to the active site. Y244 (O-(3'-phospho-DNA)-tyrosine intermediate) is an active-site residue.

It belongs to the 'phage' integrase family. XerD-like subfamily.

The protein localises to the cytoplasm. Its function is as follows. Putative tyrosine recombinase. Not involved in the cutting and rejoining of the recombining DNA molecules on dif(SL) site. This is Tyrosine recombinase XerD-like from Streptococcus agalactiae serotype V (strain ATCC BAA-611 / 2603 V/R).